Consider the following 383-residue polypeptide: TOM1-like protein 2 (383 aa).

Residues 45-178 (ATLETLEEPN…GLHARGEENS (134 aa)) enclose the VHS domain. A GAT domain is found at 223-310 (LSIKDKKEQI…VLSSYKKPDE (88 aa)). Residues 305–383 (YKKPDETEKK…LGLSSDEDEK (79 aa)) form a disordered region. 2 stretches are compositionally biased toward basic and acidic residues: residues 306 to 316 (KKPDETEKKAS) and 339 to 354 (EPVK…KHSE). 2 positions are modified to phosphoserine: Ser-377 and Ser-378.

This sequence belongs to the TOM1 family. Ubiquitously expressed.

It localises to the cytoplasm. Its subcellular location is the membrane. Binds ubiquitin in vitro. Might contribute to the loading of the ESCRT machinery. This is TOM1-like protein 2 from Arabidopsis thaliana (Mouse-ear cress).